An 86-amino-acid chain; its full sequence is Small ribosomal subunit protein bS18 (86 aa).

It belongs to the bacterial ribosomal protein bS18 family. As to quaternary structure, part of the 30S ribosomal subunit. Forms a tight heterodimer with protein bS6.

Functionally, binds as a heterodimer with protein bS6 to the central domain of the 16S rRNA, where it helps stabilize the platform of the 30S subunit. The protein is Small ribosomal subunit protein bS18 of Campylobacter lari (strain RM2100 / D67 / ATCC BAA-1060).